Reading from the N-terminus, the 1894-residue chain is Plexin-A4 (1894 aa).

Residues 1-23 (MKAMPWNWTCLLSHLLMVGMGSS) form the signal peptide. Residues 24–507 (TLLTRQPAPL…SERQLTRVPV (484 aa)) enclose the Sema domain. Over 24–1237 (TLLTRQPAPL…IAPDSPLSLP (1214 aa)) the chain is Extracellular. Intrachain disulfides connect cysteine 95-cysteine 104, cysteine 130-cysteine 138, cysteine 284-cysteine 405, cysteine 300-cysteine 356, cysteine 374-cysteine 393, cysteine 510-cysteine 527, cysteine 516-cysteine 558, cysteine 519-cysteine 536, cysteine 530-cysteine 542, and cysteine 593-cysteine 612. The 51-residue stretch at 509 to 559 (SCGQYQSCGECLGSGDPHCGWCVLHNTCTRKERCERSKEPRRFASEMKQCV) folds into the PSI 1 domain. Asparagine 655 carries an N-linked (GlcNAc...) asparagine glycan. PSI domains are found at residues 655 to 702 (NCSV…EDCP) and 803 to 856 (KCGA…SKCT). 4 IPT/TIG domains span residues 858–952 (PRIT…YYFM), 954–1037 (LTLS…FQYV), 1040–1139 (PTIV…FTYY), and 1142–1230 (PVFE…YIAP). Asparagine 1007, asparagine 1132, and asparagine 1180 each carry an N-linked (GlcNAc...) asparagine glycan. Residues 1238 to 1258 (AIVSIAVAGGLLIIFIVAVLI) form a helical membrane-spanning segment. At 1259–1894 (AYKRKSRESD…QVITLMSLDS (636 aa)) the chain is on the cytoplasmic side. Lysine 1350 is modified (N6-acetyllysine).

This sequence belongs to the plexin family. In terms of assembly, interacts with NRP1 and NRP2.

The protein localises to the cell membrane. In terms of biological role, coreceptor for SEMA3A. Necessary for signaling by class 3 semaphorins and subsequent remodeling of the cytoskeleton. Plays a role in axon guidance in the developing nervous system. Class 3 semaphorins bind to a complex composed of a neuropilin and a plexin. The plexin modulates the affinity of the complex for specific semaphorins, and its cytoplasmic domain is required for the activation of down-stream signaling events in the cytoplasm. In Homo sapiens (Human), this protein is Plexin-A4 (PLXNA4).